The following is an 83-amino-acid chain: Mu-theraphotoxin-Hhn2n (83 aa).

The first 21 residues, 1–21, serve as a signal peptide directing secretion; that stretch reads MKASMYLALAGLVLLFVVGYA. Positions 22-48 are excised as a propeptide; that stretch reads SESEEKEFPRELLSKIFAVDDFKGEER. 3 disulfide bridges follow: Cys50-Cys65, Cys57-Cys70, and Cys64-Cys77. Leu81 carries the post-translational modification Leucine amide.

It belongs to the neurotoxin 10 (Hwtx-1) family. 15 (Hntx-3) subfamily. In terms of assembly, monomer. Expressed by the venom gland.

The protein localises to the secreted. In terms of biological role, lethal neurotoxin. Selectively blocks tetrodotoxin-sensitive voltage-gated sodium channels (Nav). Does not affect tetrodotoxin-resistant voltage-gated sodium channels or calcium channels. This is Mu-theraphotoxin-Hhn2n from Cyriopagopus hainanus (Chinese bird spider).